The chain runs to 365 residues: Deoxyribonuclease-2-alpha (365 aa).

The signal sequence occupies residues 1 to 19 (MATLSSLLLTALLWVPVGT). Cys-22 and Cys-162 form a disulfide bridge. N-linked (GlcNAc...) asparagine glycans are attached at residues Asn-215, Asn-269, and Asn-293. Intrachain disulfides connect Cys-270–Cys-348 and Cys-311–Cys-330. The active site involves His-298.

Belongs to the DNase II family.

The protein localises to the lysosome. The catalysed reaction is Endonucleolytic cleavage to nucleoside 3'-phosphates and 3'-phosphooligonucleotide end-products.. Hydrolyzes DNA under acidic conditions with a preference for double-stranded DNA. Plays a major role in the clearance of nucleic acids generated through apoptosis, hence preventing autoinflammation. Necessary for proper fetal development and for definitive erythropoiesis in fetal liver and bone marrow, where it degrades nuclear DNA expelled from erythroid precursor cells. This chain is Deoxyribonuclease-2-alpha (DNASE2), found in Bos taurus (Bovine).